The sequence spans 315 residues: MACSEFSFHMPSLEELAEVLQKGLTDNFADVQVSVVDCPDLTKEPFTFPVRGICGQTRIAEVGGVPYLLPLVNKKKVYDLNEIAKVIKLPGAFILGAGAGPFQTLGFNSEFMPIVQTASEHNQPVNGSYFAHKNPADGACLLEKYSQKYHDFGCALLANLFASEGQPGKVIEVQAKRRTGELNFVSCMRQTLEEHYGDKPVGMGGTFIVQKGKVKAHIMPAEFSSCPLNSDEAVNKWLHFYEMKAPLVCLPVFVSKDPGLDLRLEHTHFFSHHGEGGHYHYDTTPDTVEYLGYFSPAQFLYRIDQPKETHAFGRD.

Positions 266, 268, and 278 each coordinate Zn(2+).

As to quaternary structure, monomer. The cofactor is Zn(2+).

The protein localises to the nucleus. It localises to the cytoplasm. Its function is as follows. Exhibits ester hydrolase activity on the substrate p-nitrophenyl acetate, in vitro. Regulates DNA damage and repair by regulating HIF1A degradation via chaperone-mediated autophagy (CMA). This Mus musculus (Mouse) protein is Ester hydrolase C11orf54 homolog.